A 681-amino-acid polypeptide reads, in one-letter code: Spermatogenesis-associated protein 21 (681 aa).

The span at 1–14 (MENRNTHTHPESKA) shows a compositional bias: basic and acidic residues. 2 disordered regions span residues 1–284 (MENR…ANSR) and 298–336 (EEATHRRTLKSRGLTARRSPKTVTSVSTSGPISSSVPTL). Composition is skewed to polar residues over residues 83 to 94 (QEPSARPRTTQD) and 159 to 173 (PSNSRSQPLKNNSPS). The segment covering 251–261 (PEERDTEKKEL) has biased composition (basic and acidic residues). The segment covering 264 to 281 (GQKQRQQALSAAGTQGPA) has biased composition (polar residues). Low complexity predominate over residues 319–335 (TVTSVSTSGPISSSVPT). The 36-residue stretch at 464–499 (FTPAQVEEALMSADVNGDGHVDFKDFLAVMTDTKRF) folds into the EF-hand domain. Positions 477, 479, 481, 483, and 488 each coordinate Ca(2+). Residues 653 to 681 (LFFQPGQQGSREHSSDSRKWLSSMPARTH) are disordered. A compositionally biased stretch (basic and acidic residues) spans 662–671 (SREHSSDSRK).

Its function is as follows. Involved in the differentiation of haploid spermatids. The chain is Spermatogenesis-associated protein 21 (Spata21) from Mus musculus (Mouse).